Here is a 586-residue protein sequence, read N- to C-terminus: Pescadillo homolog (586 aa).

The segment at 1–54 is required for 28S ribosomal RNA processing; sequence MGGLEKKKYERGSATNYITRNKARKKLQLSLPDFRRLCILKGIYPHEPKHKKKV. The interval 1–257 is sufficient for nucleolar localization; that stretch reads MGGLEKKKYE…PKIESQAQAE (257 aa). N6-acetyllysine is present on K98. Positions 305–414 are sufficient for interaction with MAP1B; sequence VTAQEEDRRK…LLLPVAEYFP (110 aa). Residues 321 to 414 enclose the BRCT domain; the sequence is KHKKLFEGLK…LLLPVAEYFP (94 aa). Positions 447 to 508 are disordered; the sequence is GEDPGNLEEE…QQRLGGKKPQ (62 aa). The span at 451–491 shows a compositional bias: acidic residues; sequence GNLEEEEEDEDDEGDDSEGDGDVAVENEEEVVEAESEEEEE. K515 participates in a covalent cross-link: Glycyl lysine isopeptide (Lys-Gly) (interchain with G-Cter in SUMO1); alternate. A Glycyl lysine isopeptide (Lys-Gly) (interchain with G-Cter in SUMO2); alternate cross-link involves residue K515. Residues 537–586 are required for 28S ribosomal RNA processing; sequence MMKKREKYLYQKIMFGKRRKIREANKLAEKRKAHDDAVRSEKKAKRTRPV. A compositionally biased stretch (basic and acidic residues) spans 562 to 577; that stretch reads KLAEKRKAHDDAVRSE. Residues 562 to 586 form a disordered region; that stretch reads KLAEKRKAHDDAVRSEKKAKRTRPV.

Belongs to the pescadillo family. In terms of assembly, component of the PeBoW complex, composed of BOP1, PES1 and WDR12. The complex is held together by BOP1, which interacts with PES1 via its N-terminal domain and with WDR12 via a high-affinity interaction between the seven-bladed beta-propeller domains of the 2 proteins. The PeBoW complex associates with the 66S pre-ribosome. The PeBoW complex also associates with DDX27, PES1 interacts directly with DDX27. Interacts with IRS1 and UBTF. May interact with MAP1B. Post-translationally, sumoylated.

The protein localises to the nucleus. It is found in the nucleolus. Its subcellular location is the nucleoplasm. The protein resides in the chromosome. Component of the PeBoW complex, which is required for maturation of 28S and 5.8S ribosomal RNAs and formation of the 60S ribosome. In Rattus norvegicus (Rat), this protein is Pescadillo homolog (Pes1).